We begin with the raw amino-acid sequence, 343 residues long: Beta-ketoacyl-[acyl-carrier-protein] synthase III 1 (343 aa).

Residues Cys-122 and His-268 contribute to the active site. Positions 269-273 (QANVR) are ACP-binding. Asn-299 is a catalytic residue.

The protein belongs to the thiolase-like superfamily. FabH family. Homodimer.

It is found in the cytoplasm. It carries out the reaction malonyl-[ACP] + acetyl-CoA + H(+) = 3-oxobutanoyl-[ACP] + CO2 + CoA. The protein operates within lipid metabolism; fatty acid biosynthesis. Essential enzyme that catalyzes the condensation reaction of fatty acid synthesis by the addition to an acyl acceptor of two carbons from malonyl-ACP. Catalyzes the first condensation reaction which initiates fatty acid synthesis and may therefore play a role in governing the total rate of fatty acid production. Possesses both acetoacetyl-ACP synthase and acetyl transacylase activities. Its substrate specificity determines the biosynthesis of branched-chain of fatty acids. The protein is Beta-ketoacyl-[acyl-carrier-protein] synthase III 1 of Streptomyces coelicolor (strain ATCC BAA-471 / A3(2) / M145).